A 611-amino-acid polypeptide reads, in one-letter code: Procollagen galactosyltransferase 1-A (611 aa).

The signal sequence occupies residues 1–24; it reads MSQAGVDRLLRGLQLLLLVLRLSA. Asn85, Asn173, Asn312, Asn370, and Asn568 each carry an N-linked (GlcNAc...) asparagine glycan. Residues 575–591 show a composition bias toward basic and acidic residues; sequence WDRAKSRKTQQQEKLRS. The segment at 575-611 is disordered; sequence WDRAKSRKTQQQEKLRSEALNSPSLGSPFDNTARDEL. The Prevents secretion from ER signature appears at 608-611; that stretch reads RDEL.

The protein belongs to the glycosyltransferase 25 family.

The protein resides in the endoplasmic reticulum lumen. It catalyses the reaction (5R)-5-hydroxy-L-lysyl-[collagen] + UDP-alpha-D-galactose = (5R)-5-O-(beta-D-galactosyl)-5-hydroxy-L-lysyl-[collagen] + UDP + H(+). Beta-galactosyltransferase that transfers beta-galactose to hydroxylysine residues of type I collagen. By acting on collagen glycosylation, facilitates the formation of collagen triple helix. The protein is Procollagen galactosyltransferase 1-A (colgalt1-a) of Xenopus laevis (African clawed frog).